The chain runs to 345 residues: Transcription factor 19 (345 aa).

Residues 31–88 enclose the FHA domain; that stretch reads YRLGHRADLCDVALRPQQEPGLISGIHAELHAEPRGDDWRVSLEDHSSQGTLVNNVRL. Residue S78 is modified to Phosphoserine. Residues 190–227 are disordered; it reads LTFSPSWGGPKSLPVPAPPGEMGTTPSAPPQRNRRKSV. A PHD-type zinc finger spans residues 293 to 342; it reads AAPCCCLPQEETVAWVQCDGCDVWFHVACVGCSIQAAREADFRCPGCRAG. C296, C298, C310, C313, H318, C321, C336, and C339 together coordinate Zn(2+).

It localises to the nucleus. Potential transcription factor that may play a role in the regulation of genes involved in cell cycle G1/S transition. May bind to regulatory elements of genes, including the promoter of the transcription factor FOXO1. The protein is Transcription factor 19 (TCF19) of Homo sapiens (Human).